We begin with the raw amino-acid sequence, 452 residues long: Translation initiation factor eIF2B subunit gamma (452 aa).

The residue at position 1 (M1) is an N-acetylmethionine. S261 is subject to Phosphoserine.

Belongs to the eIF-2B gamma/epsilon subunits family. As to quaternary structure, component of the translation initiation factor 2B (eIF2B) complex which is a heterodecamer of two sets of five different subunits: alpha, beta, gamma, delta and epsilon. Subunits alpha, beta and delta comprise a regulatory subcomplex and subunits epsilon and gamma comprise a catalytic subcomplex. Within the complex, the hexameric regulatory complex resides at the center, with the two heterodimeric catalytic subcomplexes bound on opposite sides.

The protein localises to the cytoplasm. The protein resides in the cytosol. With respect to regulation, activated by the chemical integrated stress response (ISR) inhibitor ISRIB which stimulates guanine nucleotide exchange factor activity for both phosphorylated and unphosphorylated eIF2. Its function is as follows. Acts as a component of the translation initiation factor 2B (eIF2B) complex, which catalyzes the exchange of GDP for GTP on the eukaryotic initiation factor 2 (eIF2) complex gamma subunit. Its guanine nucleotide exchange factor activity is repressed when bound to eIF2 complex phosphorylated on the alpha subunit, thereby limiting the amount of methionyl-initiator methionine tRNA available to the ribosome and consequently global translation is repressed. This Bos taurus (Bovine) protein is Translation initiation factor eIF2B subunit gamma (EIF2B3).